The chain runs to 95 residues: MSVTIKDVTYIAELAKLRFSEPEMETMTNELNNILHYIAKLDEINTDGIQPLSGIYDPVNVLREDVELQPLTSSEVLHNAPDRQDRFFKVPKVIG.

The protein belongs to the GatC family. In terms of assembly, heterotrimer of A, B and C subunits.

It catalyses the reaction L-glutamyl-tRNA(Gln) + L-glutamine + ATP + H2O = L-glutaminyl-tRNA(Gln) + L-glutamate + ADP + phosphate + H(+). The enzyme catalyses L-aspartyl-tRNA(Asn) + L-glutamine + ATP + H2O = L-asparaginyl-tRNA(Asn) + L-glutamate + ADP + phosphate + 2 H(+). Its function is as follows. Allows the formation of correctly charged Asn-tRNA(Asn) or Gln-tRNA(Gln) through the transamidation of misacylated Asp-tRNA(Asn) or Glu-tRNA(Gln) in organisms which lack either or both of asparaginyl-tRNA or glutaminyl-tRNA synthetases. The reaction takes place in the presence of glutamine and ATP through an activated phospho-Asp-tRNA(Asn) or phospho-Glu-tRNA(Gln). The sequence is that of Aspartyl/glutamyl-tRNA(Asn/Gln) amidotransferase subunit C from Chlorobium chlorochromatii (strain CaD3).